The sequence spans 73 residues: MPMWLGILVGVVALVAGVALGFFIARKYMMNYLQKNPPINEQMLKMMMMQMGQKPSQKKINQMMSAMNKQQTK.

A helical transmembrane segment spans residues 4-24 (WLGILVGVVALVAGVALGFFI).

It belongs to the UPF0154 family.

It localises to the cell membrane. This is UPF0154 protein BcerKBAB4_3367 from Bacillus mycoides (strain KBAB4) (Bacillus weihenstephanensis).